The following is a 53-amino-acid chain: Cytochrome c-552 (53 aa).

Residues cysteine 19, cysteine 22, histidine 23, and methionine 44 each coordinate heme c.

Post-translationally, binds 1 heme c group covalently per subunit.

The protein localises to the cell membrane. This is Cytochrome c-552 from Schinkia azotoformans (Bacillus azotoformans).